Reading from the N-terminus, the 347-residue chain is DNA-directed RNA polymerase subunit alpha (347 aa).

The segment at 1–226 (MLISQRPTLS…ELFGLARELN (226 aa)) is alpha N-terminal domain (alpha-NTD). The alpha C-terminal domain (alpha-CTD) stretch occupies residues 241 to 347 (ADHIASFALP…DQDYAETEQL (107 aa)).

The protein belongs to the RNA polymerase alpha chain family. Homodimer. The RNAP catalytic core consists of 2 alpha, 1 beta, 1 beta' and 1 omega subunit. When a sigma factor is associated with the core the holoenzyme is formed, which can initiate transcription.

It carries out the reaction RNA(n) + a ribonucleoside 5'-triphosphate = RNA(n+1) + diphosphate. Its function is as follows. DNA-dependent RNA polymerase catalyzes the transcription of DNA into RNA using the four ribonucleoside triphosphates as substrates. In Mycobacterium avium (strain 104), this protein is DNA-directed RNA polymerase subunit alpha.